A 619-amino-acid polypeptide reads, in one-letter code: Dihydroxy-acid dehydratase (619 aa).

D81 contributes to the Mg(2+) binding site. A [2Fe-2S] cluster-binding site is contributed by C122. Mg(2+)-binding residues include D123 and K124. At K124 the chain carries N6-carboxylysine. A [2Fe-2S] cluster-binding site is contributed by C195. Residue E494 participates in Mg(2+) binding. S520 serves as the catalytic Proton acceptor.

Belongs to the IlvD/Edd family. As to quaternary structure, homodimer. The cofactor is [2Fe-2S] cluster. It depends on Mg(2+) as a cofactor.

It carries out the reaction (2R)-2,3-dihydroxy-3-methylbutanoate = 3-methyl-2-oxobutanoate + H2O. The enzyme catalyses (2R,3R)-2,3-dihydroxy-3-methylpentanoate = (S)-3-methyl-2-oxopentanoate + H2O. Its pathway is amino-acid biosynthesis; L-isoleucine biosynthesis; L-isoleucine from 2-oxobutanoate: step 3/4. The protein operates within amino-acid biosynthesis; L-valine biosynthesis; L-valine from pyruvate: step 3/4. Functions in the biosynthesis of branched-chain amino acids. Catalyzes the dehydration of (2R,3R)-2,3-dihydroxy-3-methylpentanoate (2,3-dihydroxy-3-methylvalerate) into 2-oxo-3-methylpentanoate (2-oxo-3-methylvalerate) and of (2R)-2,3-dihydroxy-3-methylbutanoate (2,3-dihydroxyisovalerate) into 2-oxo-3-methylbutanoate (2-oxoisovalerate), the penultimate precursor to L-isoleucine and L-valine, respectively. This chain is Dihydroxy-acid dehydratase, found in Shewanella frigidimarina (strain NCIMB 400).